A 157-amino-acid chain; its full sequence is Transcriptional regulator MraZ (157 aa).

2 consecutive SpoVT-AbrB domains span residues 7-54 (TYTM…GTSL) and 83-126 (TEML…EPER).

This sequence belongs to the MraZ family. As to quaternary structure, forms oligomers.

The protein localises to the cytoplasm. It localises to the nucleoid. In Azorhizobium caulinodans (strain ATCC 43989 / DSM 5975 / JCM 20966 / LMG 6465 / NBRC 14845 / NCIMB 13405 / ORS 571), this protein is Transcriptional regulator MraZ.